A 754-amino-acid chain; its full sequence is 5-methyltetrahydropteroyltriglutamate--homocysteine methyltransferase (754 aa).

5-methyltetrahydropteroyltri-L-glutamate-binding positions include 17–20 (RELK) and Lys-117. L-homocysteine-binding positions include 431–433 (IGS) and Glu-484. L-methionine contacts are provided by residues 431–433 (IGS) and Glu-484. 5-methyltetrahydropteroyltri-L-glutamate is bound by residues 515-516 (RC) and Trp-561. Asp-599 contacts L-homocysteine. Position 599 (Asp-599) interacts with L-methionine. Glu-605 contacts 5-methyltetrahydropteroyltri-L-glutamate. Positions 641, 643, and 665 each coordinate Zn(2+). His-694 serves as the catalytic Proton donor. Cys-726 is a Zn(2+) binding site.

Belongs to the vitamin-B12 independent methionine synthase family. The cofactor is Zn(2+).

The catalysed reaction is 5-methyltetrahydropteroyltri-L-glutamate + L-homocysteine = tetrahydropteroyltri-L-glutamate + L-methionine. The protein operates within amino-acid biosynthesis; L-methionine biosynthesis via de novo pathway; L-methionine from L-homocysteine (MetE route): step 1/1. Functionally, catalyzes the transfer of a methyl group from 5-methyltetrahydrofolate to homocysteine resulting in methionine formation. The sequence is that of 5-methyltetrahydropteroyltriglutamate--homocysteine methyltransferase from Salmonella typhi.